A 352-amino-acid polypeptide reads, in one-letter code: Inner membrane protein YeeA (352 aa).

At 1–25 (MRADKSLSPFEIRVYRHYRIVHGTR) the chain is on the cytoplasmic side. Helical transmembrane passes span 26–46 (VALA…PEST) and 47–67 (WPLV…NVVP). Arg68 is a topological domain (cytoplasmic). Residues 69-89 (AFERIGGTVLGSILGLIALQL) traverse the membrane as a helical segment. A topological domain (periplasmic) is located at residue Glu90. Residues 91 to 111 (LISLPLMLVWCAAAMFLCGWL) traverse the membrane as a helical segment. The Cytoplasmic segment spans residues 112–117 (ALGKKP). The helical transmembrane segment at 118–138 (YQGLLIGVTLAIVVGSPTGEI) threads the bilayer. At 139–147 (DTALWRSGD) the chain is on the periplasmic side. Residues 148 to 168 (VILGSLLAMLFTGIWPQRAFI) traverse the membrane as a helical segment. Topologically, residues 169-352 (HWRIQLAKSL…SNLICRALRK (184 aa)) are cytoplasmic.

The protein resides in the cell inner membrane. The sequence is that of Inner membrane protein YeeA (yeeA) from Escherichia coli (strain K12).